Here is a 247-residue protein sequence, read N- to C-terminus: HTH-type transcriptional regulator SarU (247 aa).

2 consecutive DNA-binding regions (H-T-H motif) follow at residues 53–76 (LKEI…SLSK) and 178–201 (LKDL…RLNN).

It belongs to the SarA family.

It is found in the cytoplasm. Its function is as follows. Positive regulator of RNAII and RNAIII in a cell density-dependent manner. It can contribute to the expression of virulence genes controlled by agr. May also regulate target genes via an agr-independent pathway. The chain is HTH-type transcriptional regulator SarU (sarU) from Staphylococcus aureus (strain COL).